The chain runs to 144 residues: Large ribosomal subunit protein uL15 (144 aa).

The tract at residues 20–49 (GRGIGSGLGKTGGRGHKGQKSRSGGFHKVG) is disordered. The segment covering 21 to 31 (RGIGSGLGKTG) has biased composition (gly residues).

The protein belongs to the universal ribosomal protein uL15 family. Part of the 50S ribosomal subunit.

Its function is as follows. Binds to the 23S rRNA. The chain is Large ribosomal subunit protein uL15 from Neisseria gonorrhoeae (strain ATCC 700825 / FA 1090).